A 614-amino-acid polypeptide reads, in one-letter code: Chaperone protein DnaK (614 aa).

Threonine 176 bears the Phosphothreonine; by autocatalysis mark. The tract at residues 576–614 (YQQQQSQGGEAGAANGDASKKDDNTVDGDFHEVHDDDKK) is disordered. Low complexity predominate over residues 577–589 (QQQQSQGGEAGAA). Positions 593–614 (ASKKDDNTVDGDFHEVHDDDKK) are enriched in basic and acidic residues.

Belongs to the heat shock protein 70 family.

Acts as a chaperone. The protein is Chaperone protein DnaK of Fructilactobacillus sanfranciscensis (Lactobacillus sanfranciscensis).